A 294-amino-acid chain; its full sequence is Nucleoside-specific channel-forming protein Tsx (294 aa).

The first 22 residues, 1 to 22, serve as a signal peptide directing secretion; that stretch reads MKKTLLAASAVVALSASFTAGA.

The protein belongs to the nucleoside-specific channel-forming outer membrane porin (Tsx) (TC 1.B.10) family.

Its subcellular location is the cell outer membrane. Functions as a substrate-specific channel for nucleosides and deoxynucleosides. Also functions in albicidin uptake and as receptor for colicin K. Also is a receptor for several Tsx-specific bacteriophages. This Klebsiella aerogenes (strain ATCC 13048 / DSM 30053 / CCUG 1429 / JCM 1235 / KCTC 2190 / NBRC 13534 / NCIMB 10102 / NCTC 10006 / CDC 819-56) (Enterobacter aerogenes) protein is Nucleoside-specific channel-forming protein Tsx.